The following is a 172-amino-acid chain: S-ribosylhomocysteine lyase (172 aa).

His-54, His-58, and Cys-128 together coordinate Fe cation.

The protein belongs to the LuxS family. Homodimer. It depends on Fe cation as a cofactor.

It carries out the reaction S-(5-deoxy-D-ribos-5-yl)-L-homocysteine = (S)-4,5-dihydroxypentane-2,3-dione + L-homocysteine. In terms of biological role, involved in the synthesis of autoinducer 2 (AI-2) which is secreted by bacteria and is used to communicate both the cell density and the metabolic potential of the environment. The regulation of gene expression in response to changes in cell density is called quorum sensing. Catalyzes the transformation of S-ribosylhomocysteine (RHC) to homocysteine (HC) and 4,5-dihydroxy-2,3-pentadione (DPD). The polypeptide is S-ribosylhomocysteine lyase (Vibrio cholerae serotype O1 (strain ATCC 39541 / Classical Ogawa 395 / O395)).